A 331-amino-acid chain; its full sequence is Protein RecA (331 aa).

66-73 (GPESSGKT) lines the ATP pocket.

It belongs to the RecA family.

Its subcellular location is the cytoplasm. Can catalyze the hydrolysis of ATP in the presence of single-stranded DNA, the ATP-dependent uptake of single-stranded DNA by duplex DNA, and the ATP-dependent hybridization of homologous single-stranded DNAs. It interacts with LexA causing its activation and leading to its autocatalytic cleavage. In Acholeplasma laidlawii (strain PG-8A), this protein is Protein RecA.